A 29-amino-acid polypeptide reads, in one-letter code: Cyclotide vibi-C (29 aa).

Residues 1–29 constitute a cross-link (cyclopeptide (Gly-Asn)); that stretch reads GLPVCGETCAFGSCYTPGCSCSWPVCTRN. Intrachain disulfides connect Cys-5-Cys-19, Cys-9-Cys-21, and Cys-14-Cys-26.

This is a cyclic peptide.

Its function is as follows. Probably participates in a plant defense mechanism. This is Cyclotide vibi-C from Viola biflora (Yellow wood violet).